A 108-amino-acid chain; its full sequence is MAKVTSEPQKPNEDVDEQTPSTSSTKGRKKGKTPRQRRSRSGVKGLKTTRKAKRPLRGSSSQKAGETNTPAGKPKKARGPILRGRYHRLKEKMKKEEADKEQSETSVL.

The disordered stretch occupies residues 1 to 108 (MAKVTSEPQK…DKEQSETSVL (108 aa)). Positions 26–56 (KGRKKGKTPRQRRSRSGVKGLKTTRKAKRPL) are enriched in basic residues. Over residues 58-70 (GSSSQKAGETNTP) the composition is skewed to polar residues. Basic residues predominate over residues 73-92 (KPKKARGPILRGRYHRLKEK). A compositionally biased stretch (basic and acidic residues) spans 93–108 (MKKEEADKEQSETSVL).

This is an uncharacterized protein from Homo sapiens (Human).